The primary structure comprises 65 residues: Conotoxin TsMRCL-04 (65 aa).

The signal sequence occupies residues 1-20; sequence MRCLPVFIILLLLIPSAASA. Positions 21-48 are excised as a propeptide; sequence AQPETKDDAALASFYDNAKRTLQRHWAK. Glutamic acid 1-amide is present on E63.

Belongs to the conotoxin T superfamily. Post-translationally, contains 2 disulfide bonds that can be either 'C1-C3, C2-C4' or 'C1-C4, C2-C3', since these disulfide connectivities have been observed for conotoxins with cysteine framework V (for examples, see AC P0DQQ7 and AC P81755). In terms of tissue distribution, expressed by the venom duct.

The protein localises to the secreted. In Conus tessulatus (Tessellate cone), this protein is Conotoxin TsMRCL-04.